The sequence spans 132 residues: MRRRRYLEKLEWVEREINFATEHAMSDEVRKRAVLYSIMTAVEVVMDIVAMLVKDLGKQVEDDYTNISKLLEECVIEESEAELLRRYNGLRNAIAHHYNHLDLSKVERALTQLDELYEVAVKLVKTADKLAG.

Residues arginine 91 and histidine 96 contribute to the active site. The short motif at arginine 91–tyrosine 98 is the RX(4)HXY motif element. At tyrosine 98 the chain carries O-di-AMP-tyrosine.

The protein belongs to the HepT RNase toxin family. In terms of assembly, homodimer, probably forms a complex with cognate antitoxin AF_0948. Post-translationally, modified by cognate antitoxin AF_0948; probably at least 2 successive AMPylation events occur on Tyr-98.

Functionally, probable toxic component of a putative type VII toxin-antitoxin (TA) system, probably an RNase. Probably neutralized by cognate antitoxin AF_0948. Neutralization may be due to AMPylation by AF_0948. This Archaeoglobus fulgidus (strain ATCC 49558 / DSM 4304 / JCM 9628 / NBRC 100126 / VC-16) protein is Putative RNase AF_0947.